The following is a 368-amino-acid chain: Proton-coupled zinc antiporter SLC30A8 (368 aa).

At 1–78 (MEFLERTYLV…AKWRLCAASA (78 aa)) the chain is on the cytoplasmic side. Residues His-51, Cys-52, and His-53 each contribute to the Zn(2+) site. The HCH Motif; seals regulatory zinc-binding pocket motif lies at 51-53 (HCH). Residues 79–99 (ICFFFMVAEVVGGHVAGSLAV) traverse the membrane as a helical segment. Residues 100 to 102 (LTD) are Lumenal, vesicle-facing. Residues 103–123 (AAHLLIDLTSFLLSLFSLWLS) traverse the membrane as a helical segment. 2 residues coordinate Zn(2+): His-105 and Asp-109. Residues 124 to 139 (SRPPSKRLTFGWYRAE) are Cytoplasmic-facing. The chain crosses the membrane as a helical span at residues 140-160 (ILGALLSVLCIWVVTGVLVYL). The Lumenal, vesicle segment spans residues 161 to 174 (ACERLLYPDYQIQA). A helical transmembrane segment spans residues 175-195 (GIMITVSGCAVAANIVLTLIL). At 196–216 (HQRHLGHNHKDAQANASVRAA) the chain is on the cytoplasmic side. The helical transmembrane segment at 217–237 (FVHALGDVFQSTSVLISALII) threads the bilayer. Zn(2+)-binding residues include His-219 and Asp-223. Topologically, residues 238-245 (YFKPDYKM) are lumenal, vesicle. A helical transmembrane segment spans residues 246–266 (ADPVCTFISSVLALASTVMIL). Residues 267 to 368 (KDFSILLMEG…SCLLCEDPQD (102 aa)) lie on the Cytoplasmic side of the membrane. Zn(2+)-binding residues include His-300, His-317, His-344, Glu-351, Cys-360, and Cys-363.

The protein belongs to the cation diffusion facilitator (CDF) transporter (TC 2.A.4) family. SLC30A subfamily. Homodimer. In terms of tissue distribution, expressed in endocrine pancreatic islet alpha and beta cells. May be more abundant in beta cells than in alpha cells. Expressed in cubical epithelium lining thyroid follicles (at protein level). In the adrenal gland, detected in the cortex, but not in the medulla (at protein level).

It is found in the cytoplasmic vesicle. It localises to the secretory vesicle membrane. Its subcellular location is the cell membrane. It carries out the reaction Zn(2+)(in) + 2 H(+)(out) = Zn(2+)(out) + 2 H(+)(in). Its function is as follows. Proton-coupled zinc ion antiporter mediating the entry of zinc into the lumen of pancreatic beta cell secretory granules, thereby regulating insulin secretion. The chain is Proton-coupled zinc antiporter SLC30A8 from Rattus norvegicus (Rat).